Reading from the N-terminus, the 474-residue chain is RNA-binding protein Nova-1 (474 aa).

The span at 1–12 (MAAAPIQQNGTH) shows a compositional bias: polar residues. The disordered stretch occupies residues 1-43 (MAAAPIQQNGTHTGVPIDLDPPDSRKRPLEAPPEAGSTKRTNT). Residues 26 to 42 (KRPLEAPPEAGSTKRTN) carry the Bipartite nuclear localization signal motif. 3 consecutive KH domains span residues 48 to 115 (QYFL…HGFI), 146 to 212 (IKQV…VELI), and 396 to 463 (KDVV…QYLI). A required for RNA binding region spans residues 394–474 (GSKDVVEIAV…QRITYEQGVR (81 aa)).

As to quaternary structure, interacts with PTBP2; the interaction is direct.

It is found in the nucleus. Its function is as follows. Functions to regulate alternative splicing in neurons by binding pre-mRNA in a sequence-specific manner to activate exon inclusion or exclusion. It binds specifically to the sequences 5'-YCAY-3' and regulates splicing in only a subset of regulated exons. Binding to an exonic 5'-YCAY-3' cluster changes the protein complexes assembled on pre-mRNA, blocking U1 snRNP binding and exon inclusion, whereas binding to an intronic 5'-YCAY-3' cluster enhances spliceosome assembly and exon inclusion. Binding to 5'-YCAY-3' clusters results in a local and asymmetric action to regulate spliceosome assembly and alternative splicing in neurons. Binding to an exonic 5'-YCAY-3' cluster changed the protein complexes assembled on pre-mRNA, blocking U1 snRNP (small nuclear ribonucleoprotein) binding and exon inclusion, whereas binding to an intronic 5'-YCAY-3' cluster enhanced spliceosome assembly and exon inclusion. With NOVA1, they perform unique biological functions in different brain areas and cell types. Autoregulates its own expression by acting as a splicing repressor. Acts to activate the inclusion of exon E3A in the glycine receptor alpha-2 chain and of exon E9 in gamma-aminobutyric-acid receptor gamma-2 subunit via a distal downstream UCAU-rich intronic splicing enhancer. Acts to regulate a novel glycine receptor alpha-2 chain splice variant (alpha-2N) in developing spinal cord. This is RNA-binding protein Nova-1 from Rattus norvegicus (Rat).